A 142-amino-acid polypeptide reads, in one-letter code: Transcriptional regulator MraZ (142 aa).

SpoVT-AbrB domains follow at residues 5-47 (EYPY…PLAS) and 76-119 (ANKA…NPER).

It belongs to the MraZ family. In terms of assembly, forms oligomers.

It is found in the cytoplasm. Its subcellular location is the nucleoid. This chain is Transcriptional regulator MraZ, found in Deinococcus geothermalis (strain DSM 11300 / CIP 105573 / AG-3a).